The following is a 399-amino-acid chain: Chorismate synthase (399 aa).

Arg-40 and Arg-46 together coordinate NADP(+). FMN is bound by residues 134–136 (RAS), 255–256 (QA), Gly-299, 314–318 (KPIST), and Arg-340.

The protein belongs to the chorismate synthase family. In terms of assembly, homotetramer. FMNH2 is required as a cofactor.

It catalyses the reaction 5-O-(1-carboxyvinyl)-3-phosphoshikimate = chorismate + phosphate. Its pathway is metabolic intermediate biosynthesis; chorismate biosynthesis; chorismate from D-erythrose 4-phosphate and phosphoenolpyruvate: step 7/7. Its function is as follows. Catalyzes the anti-1,4-elimination of the C-3 phosphate and the C-6 proR hydrogen from 5-enolpyruvylshikimate-3-phosphate (EPSP) to yield chorismate, which is the branch point compound that serves as the starting substrate for the three terminal pathways of aromatic amino acid biosynthesis. This reaction introduces a second double bond into the aromatic ring system. This Mycolicibacterium smegmatis (strain ATCC 700084 / mc(2)155) (Mycobacterium smegmatis) protein is Chorismate synthase.